The primary structure comprises 84 residues: Putative regulatory protein Dde_2720 (84 aa).

Belongs to the RemA family.

This chain is Putative regulatory protein Dde_2720, found in Oleidesulfovibrio alaskensis (strain ATCC BAA-1058 / DSM 17464 / G20) (Desulfovibrio alaskensis).